A 416-amino-acid polypeptide reads, in one-letter code: UDP-N-acetylmuramoylalanine--D-glutamate ligase (416 aa).

An ATP-binding site is contributed by 108–114; sequence GTTGKTT.

Belongs to the MurCDEF family.

It is found in the cytoplasm. It catalyses the reaction UDP-N-acetyl-alpha-D-muramoyl-L-alanine + D-glutamate + ATP = UDP-N-acetyl-alpha-D-muramoyl-L-alanyl-D-glutamate + ADP + phosphate + H(+). The protein operates within cell wall biogenesis; peptidoglycan biosynthesis. Cell wall formation. Catalyzes the addition of glutamate to the nucleotide precursor UDP-N-acetylmuramoyl-L-alanine (UMA). The polypeptide is UDP-N-acetylmuramoylalanine--D-glutamate ligase (Chlamydia trachomatis serovar L2 (strain ATCC VR-902B / DSM 19102 / 434/Bu)).